We begin with the raw amino-acid sequence, 157 residues long: Type II restriction enzyme PvuII (157 aa).

The Mg(2+) site is built by aspartate 58 and glutamate 68.

As to quaternary structure, homodimer. It depends on Mg(2+) as a cofactor.

It carries out the reaction Endonucleolytic cleavage of DNA to give specific double-stranded fragments with terminal 5'-phosphates.. Its function is as follows. A P subtype restriction enzyme that recognizes the double-stranded sequence 5'-CAGCTG-3' and cleaves after G-3. The protein is Type II restriction enzyme PvuII (pvuIIR) of Proteus hauseri.